The primary structure comprises 1575 residues: Ras GTPase-activating-like protein IQGAP2 (1575 aa).

Ser16 is modified (phosphoserine). Positions 41-156 (LCHLEEAKRW…YCIHALSLYL (116 aa)) constitute a Calponin-homology (CH) domain. Thr356 carries the post-translational modification Phosphothreonine. In terms of domain architecture, WW spans 594–627 (VSSDGSWLKLNLHKKYDYYYNTDSKESSWVTPES). A phosphoserine mark is found at Ser595, Ser599, and Ser685. 3 consecutive IQ domains span residues 690-719 (QEEN…TFID), 720-749 (NTDS…YFRD), and 750-779 (HNNE…SENP). The residue at position 716 (Thr716) is a Phosphothreonine. 4 positions are modified to phosphothreonine: Thr782, Thr881, Thr1002, and Thr1269. Residues 933–1182 (YLLLKLFKTA…QEFRKYFKEA (250 aa)) enclose the Ras-GAP domain. Phosphoserine is present on residues Ser1271, Ser1279, Ser1358, and Ser1461.

Isoform 2 expression is enhanced in testis.

Functionally, binds to activated CDC42 and RAC1 but does not seem to stimulate their GTPase activity. Associates with calmodulin. The sequence is that of Ras GTPase-activating-like protein IQGAP2 (IQGAP2) from Homo sapiens (Human).